The primary structure comprises 54 residues: uncharacterized protein (54 aa).

2 stretches are compositionally biased toward basic and acidic residues: residues 1 to 19 (MTEKKQQNKPNENPEHNDL) and 26 to 54 (EELKENMNDEKHKRQQRDNSQSERDYDTK). The disordered stretch occupies residues 1-54 (MTEKKQQNKPNENPEHNDLTDPIPNEELKENMNDEKHKRQQRDNSQSERDYDTK).

This is an uncharacterized protein from Bacillus subtilis (strain 168).